A 589-amino-acid chain; its full sequence is MKRVRTEQVQVAVSCYLKRRQYVDSEGPLKQGLRLSQTPEEMAANLTVQSESGCANAVSAAPCQAEPQQYEVQFGRLRSFLTDSDSQYSREVMPLLYPLFVYLHLNLVQSGPKSTVESFYSRFHGMFLQNASQKDVIEQLQTTQTIQDILSNFQLRAFLDNKYVVRLQEDSYNYLIRYLQSDNNTALCKVLAVHIHLDVQPAKRTDYQLYASGGSSRTENSSLEPPEVPSPILQNEAALEVLQESIKRVKDGPPSLTTICFYAFYNTEQLLNTAEISSDSKLLAAGFDNSCIKLWSLRSKKLKSEPHHVDTSRIRLACDTLEEEENEEDNTGTEMKILRGHCGPVYSTRFLADSSGLLSCSEDMSIRYWDLGSFTNTVLYQGHAYPVWDVDISPFSLYFASGSHDRTARLWSFDRTYPLRIYAGHLADVDCVKFHPNSNYLATGSTDKTVRLWSAQQGNSVRLFTGHRGPVLSLSFSPNGKYLASAGEDQRLKLWDLASGTLFKELRGHTDSITSLAFSPDSGLIASASMDNSVRVWDIRSTCCNTPADGSSGELVGVYTGQMSNVLSVQFMACNLLLVTGITQENQEH.

6 WD repeats span residues 266–305 (NTEQLLNTAEISSDSKLLAAGFDNSCIKLWSLRSKKLKSE), 340–379 (GHCGPVYSTRFLADSSGLLSCSEDMSIRYWDLGSFTNTVL), 382–421 (GHAYPVWDVDISPFSLYFASGSHDRTARLWSFDRTYPLRI), 424–463 (GHLADVDCVKFHPNSNYLATGSTDKTVRLWSAQQGNSVRL), 466–505 (GHRGPVLSLSFSPNGKYLASAGEDQRLKLWDLASGTLFKE), and 508–547 (GHTDSITSLAFSPDSGLIASASMDNSVRVWDIRSTCCNTP).

The protein belongs to the WD repeat TAF5 family. The PCAF complex is composed of a number of TBP-associated factors (TAFS), such as TAF5, TAF5L, TAF6, TAF6L, TAF9, TAF10 and TAF12, PCAF, and also PCAF-associated factors (PAFs), such as TADA2L/ADA2, TADA3L/ADA3 and SPT3. Component of the STAGA transcription coactivator-HAT complex, at least composed of SUPT3H, GCN5L2, TAF5L, TAF6L, SUPT7L, TADA3L, TAD1L, TAF10, TAF12, TRRAP and TAF9.

The protein resides in the nucleus. In terms of biological role, functions as a component of the PCAF complex. The PCAF complex is capable of efficiently acetylating histones in a nucleosomal context. The PCAF complex could be considered as the human version of the yeast SAGA complex. With TAF6L, acts as an epigenetic regulator essential for somatic reprogramming. Regulates target genes through H3K9ac deposition and MYC recruitment which trigger MYC regulatory network to orchestrate gene expression programs to control embryonic stem cell state. In Mus musculus (Mouse), this protein is TAF5-like RNA polymerase II p300/CBP-associated factor-associated factor 65 kDa subunit 5L.